Consider the following 400-residue polypeptide: 8-amino-7-oxononanoate synthase (400 aa).

Arg21 contributes to the substrate binding site. Residue Gly112–Tyr113 participates in pyridoxal 5'-phosphate binding. A substrate-binding site is contributed by His137. The pyridoxal 5'-phosphate site is built by Ser183, His211, and Thr239. Residue Lys242 is modified to N6-(pyridoxal phosphate)lysine. Thr358 lines the substrate pocket.

Belongs to the class-II pyridoxal-phosphate-dependent aminotransferase family. BioF subfamily. As to quaternary structure, homodimer. It depends on pyridoxal 5'-phosphate as a cofactor.

The catalysed reaction is 6-carboxyhexanoyl-[ACP] + L-alanine + H(+) = (8S)-8-amino-7-oxononanoate + holo-[ACP] + CO2. It participates in cofactor biosynthesis; biotin biosynthesis. Functionally, catalyzes the decarboxylative condensation of pimeloyl-[acyl-carrier protein] and L-alanine to produce 8-amino-7-oxononanoate (AON), [acyl-carrier protein], and carbon dioxide. This is 8-amino-7-oxononanoate synthase from Burkholderia lata (strain ATCC 17760 / DSM 23089 / LMG 22485 / NCIMB 9086 / R18194 / 383).